We begin with the raw amino-acid sequence, 244 residues long: Flavin-dependent thymidylate synthase (244 aa).

A ThyX domain is found at 7-199 (PRVFLIASWG…PNLARLVWED (193 aa)). FAD is bound by residues S60 and 83–85 (RHR). DUMP-binding positions include 80-83 (QFIR), 93-95 (SQR), and R137. The ThyX motif motif lies at 83–93 (RHRMASYWSES). Residues 153 to 155 (NAR) and N160 each bind FAD. R165 lines the dUMP pocket. R165 serves as the catalytic Involved in ionization of N3 of dUMP, leading to its activation.

This sequence belongs to the thymidylate synthase ThyX family. As to quaternary structure, homotetramer. The cofactor is FAD.

It carries out the reaction dUMP + (6R)-5,10-methylene-5,6,7,8-tetrahydrofolate + NADPH + H(+) = dTMP + (6S)-5,6,7,8-tetrahydrofolate + NADP(+). It participates in pyrimidine metabolism; dTTP biosynthesis. In terms of biological role, catalyzes the reductive methylation of 2'-deoxyuridine-5'-monophosphate (dUMP) to 2'-deoxythymidine-5'-monophosphate (dTMP) while utilizing 5,10-methylenetetrahydrofolate (mTHF) as the methyl donor, and NADPH and FADH(2) as the reductant. The protein is Flavin-dependent thymidylate synthase of Pyrobaculum aerophilum (strain ATCC 51768 / DSM 7523 / JCM 9630 / CIP 104966 / NBRC 100827 / IM2).